A 242-amino-acid polypeptide reads, in one-letter code: UPF0246 protein SP_1547 (242 aa).

This sequence belongs to the UPF0246 family.

In Streptococcus pneumoniae serotype 4 (strain ATCC BAA-334 / TIGR4), this protein is UPF0246 protein SP_1547.